The following is a 108-amino-acid chain: Putative pterin-4-alpha-carbinolamine dehydratase (108 aa).

It belongs to the pterin-4-alpha-carbinolamine dehydratase family.

The enzyme catalyses (4aS,6R)-4a-hydroxy-L-erythro-5,6,7,8-tetrahydrobiopterin = (6R)-L-erythro-6,7-dihydrobiopterin + H2O. This chain is Putative pterin-4-alpha-carbinolamine dehydratase, found in Chromobacterium violaceum (strain ATCC 12472 / DSM 30191 / JCM 1249 / CCUG 213 / NBRC 12614 / NCIMB 9131 / NCTC 9757 / MK).